We begin with the raw amino-acid sequence, 234 residues long: uncharacterized protein (234 aa).

Transmembrane regions (helical) follow at residues 32-52 (GLRT…VSVL), 62-82 (IPAQ…LKEG), and 106-126 (QGLF…NIAL).

The protein belongs to the MgtC/SapB family.

The protein localises to the cell membrane. This is an uncharacterized protein from Synechocystis sp. (strain ATCC 27184 / PCC 6803 / Kazusa).